The following is a 227-amino-acid chain: Ribose-5-phosphate isomerase A (227 aa).

Residues 28–31 (TGST), 85–88 (DGAD), and 98–101 (KGGG) each bind substrate. Glu-107 acts as the Proton acceptor in catalysis. Residue Lys-125 participates in substrate binding.

The protein belongs to the ribose 5-phosphate isomerase family. As to quaternary structure, homodimer.

It catalyses the reaction aldehydo-D-ribose 5-phosphate = D-ribulose 5-phosphate. It functions in the pathway carbohydrate degradation; pentose phosphate pathway; D-ribose 5-phosphate from D-ribulose 5-phosphate (non-oxidative stage): step 1/1. Its function is as follows. Catalyzes the reversible conversion of ribose-5-phosphate to ribulose 5-phosphate. In Limosilactobacillus reuteri (strain DSM 20016) (Lactobacillus reuteri), this protein is Ribose-5-phosphate isomerase A.